The primary structure comprises 157 residues: MKIVLLVVGKTDSKLMAQATEEYIRRLSHYVSFEVEVIPDVRLGSKLSSEQQKDAEGREILARLRPSDSTVLLDERGREYSSMEFSAFLQKKMLTGTRRMVFVIGGPYGFSPAVQEAVADRISLSRMTFSHQMIRLFFTEQVYRAMTILNHEPYHHE.

S-adenosyl-L-methionine contacts are provided by residues Leu73, Gly105, and 124-129 (LSRMTF).

Belongs to the RNA methyltransferase RlmH family. In terms of assembly, homodimer.

It localises to the cytoplasm. The enzyme catalyses pseudouridine(1915) in 23S rRNA + S-adenosyl-L-methionine = N(3)-methylpseudouridine(1915) in 23S rRNA + S-adenosyl-L-homocysteine + H(+). Functionally, specifically methylates the pseudouridine at position 1915 (m3Psi1915) in 23S rRNA. The polypeptide is Ribosomal RNA large subunit methyltransferase H (Porphyromonas gingivalis (strain ATCC 33277 / DSM 20709 / CIP 103683 / JCM 12257 / NCTC 11834 / 2561)).